The sequence spans 101 residues: Small ribosomal subunit protein uS14 (101 aa).

The protein belongs to the universal ribosomal protein uS14 family. Part of the 30S ribosomal subunit. Contacts proteins S3 and S10.

Its function is as follows. Binds 16S rRNA, required for the assembly of 30S particles and may also be responsible for determining the conformation of the 16S rRNA at the A site. This is Small ribosomal subunit protein uS14 from Roseobacter denitrificans (strain ATCC 33942 / OCh 114) (Erythrobacter sp. (strain OCh 114)).